A 2372-amino-acid polypeptide reads, in one-letter code: MAGDIILEDEEENILYDLLVNTEWPPETDTQLRGLKEHNSSLVAKAVTGPFRFFLHYLCPSSSTLPPGLVRLATKQVNWQLVLASNGKLLAVVQDQCVEIRSARDDFGSIIGKCQVPKDPNPHWRRVAWSHDCALLAYADSTGTVRVFDLMGSELFIIPPAMSFPGDFSYAAAGLMFLEYTGSAQWSAELLVITYSGQLKSYLVSVGTNQGFQENHTFSFSAHYSNGITTAIYHPGHRLLLVGGCESGDSDVSRASQCGITAWRVLSGLPHYKQVTSYEDDISSSQRRGFFKMPSFRLFSRHNGEQDGVFRMSLSPDGTILAVIHFSGSLSLWDIPSFKLRGSWKQEEQPGFDEINPEWKTSLEKRKKIKDKEQYQSLLDVSWWSETALILARCSGALTVSSVRTLKNLLGKSCEWFEPSPRVTSAHDGGFLSLECEVKLAHKRSRLESSVKGEEDDGDDDSDSDEEASAKARYFGYVKQGLYYVTEMERFAPPRKRPRTVIKNYRLVSLRSTTPEELYQRKIDNEEYGEALSLAQAYGLDSDLVYQRQWRKSTVSIASIQDYLSKIKKRSWVLHECVERVPENVDAAKELLQYGLKGTDLEALIAIGAREDQGRFILSGDLDMDDAPYEDFLSMEEELEQRKERESKKRQELLKKVDFSKLTLEQKELCRSRLKLLCYLDRLATYEEILGGPHAAEQRFDGEFFKKFRNQNIVLSARTYARESNVQALDILFTYHGAELLQHRLAILCNFPETTSPHEYSDLLPKAGVDKEGNLVLIPWEESRHRDLDWCEVLECREVVEPKPMDDCQFLYEEQPELERFRSADPFITLLTEWYLTRAQDIESHSRQVDCSLSLVRLGKEQNIPGLERLCDDLVTMETLVYETSCDLSVTLKELQQLRDIDKLRLLMKNSSEDRYVRNCFQWMVPFLHRCEGQRVGSASSLLREYLVTLAKDDLTLPLKLFQHSKPDCHPKIIGDSDQLMTVALKCIYSCERDDQLALCYDVLECLPQRGYGPETDTTKALHDQVDTLEKHLSVAEVLEKHGLQKPISFVRNSQNSKEEAHQLMVRLTRHTGRKNPPVSETVWRSLLQDLLDMQQNVYTCLEPETCHQVFVESLLCSSREENVRLAGQLMHCSGVSEDTPVSVSLRGKAHARVSYSRSVELVLAAAREYFNSSATLSDPCMSLARSCLQLITDCPPLVQEELDLITALSRLEQFGVKILPLQVRLRTDRLSLIKECISQCPTAYRQSLLLLSLARLLRVAGDDEAKRKGQVLTLLAEQALLCQDFKASYIHCQELMAAGYSEGWDVCAQLGQCETFTQLSGRQELMAFSLTHCPPSRIQTLLAASSSLQTQVLYQAVNYKIDPSQARRTGSELFEIKVLDDENVTEIPTKLYSVGAAVPGSINPTDLLHRTTARTIEVLTNTTMSTKAVLTTVIDSHWWRESLSLLRPLHGPAVDRNRAGAANQNADLEKQGCSPFYEELFDDPYVNTSEDVYSSYHYNPQEDFAEVLLRTGKLAETNSEGQNLFPATEVLLQLASDAFPKDMTLALAYLLALPQVLDANTCFEKQPPSALSLHLAAYYYSLQIYSRLAPCFKDKCSPLYRADPRALIRLVTKHVTDHAGCDWPDEDLEALIGQLRLYSERLTDFTQAQVLQGLGRGVDVQRFSSDNQYKKETILGLAETLDENVYSISRSLAHRYSIPLWEVHMTHLEFLFTDSGLSTKDIEGRTEALGLFETLKTDPESFYMHMTKYVYPSIAGTDQLRLLFYFTLLENCGCANYFSQTAMKPDTHLKLLKKLKAVAVGLDYKKMTEENSDPLKALEPILTSQNVLSISKLASRIPQKGGEALTSSAVHSTWLHKLFWEGDQHVLKKAPQTDQDFLHAYDTCAKYFDRLLPVDFVNFLDAITFSPEAANKLSVGTRLEITKRAQKALKSISDKTKKKGNDDRSENSAFNFDTALTHVQQSLTHLETLSHSFLLSLKTSQEELLQKYSRIYDLSRSEQSKVHHLAVTMATDGQPLERIEQLLSVAVGTSDLSPKSVVQDAVERIISALSGDKDVLKDYADPLKVLEGIVAVVHTNVQSGGNIVTSEDMLEWLRPFCGDDTKPVRPRIEVLQILEHSFNLSDQDIHLLVYFRSQAILKACWPNRKCEMEDVENEKKRNSLFLELLESSSKWEEFQHLMLLLQAWPPVTDKSRLETDQNPWVCLTSTLLVHSSSVSQINIGNEVLSMCRSLYLTKHKLNPQGIGNISSLLLNAGLKLPALKLMTESKDEHLLKLTQDQIRNITEVTEEVCDTELLSLLLNAGMLISCVDTAVYPSLVSHMLAQGDWDVEKAAYDLQQAGHSAQAGSLLLSYRGSHPGQFTFNSALAVIRKWL.

2 WD repeats span residues 119 to 158 (DPNP…LFII) and 304 to 343 (GEQD…LRGS). The segment at 447–468 (LESSVKGEEDDGDDDSDSDEEA) is disordered. The span at 454–467 (EEDDGDDDSDSDEE) shows a compositional bias: acidic residues. A coiled-coil region spans residues 629-668 (YEDFLSMEEELEQRKERESKKRQELLKKVDFSKLTLEQKE).

It localises to the endoplasmic reticulum. In terms of biological role, involved in Golgi-to-endoplasmic reticulum (ER) retrograde transport; the function is proposed to depend on its association in the NRZ complex which is believed to play a role in SNARE assembly at the ER. Required for normal embryonic development. May play a role in the nonsense-mediated decay pathway of mRNAs containing premature stop codons. The protein is NBAS subunit of NRZ tethering complex of Danio rerio (Zebrafish).